Reading from the N-terminus, the 903-residue chain is Protein translocase subunit SecA (903 aa).

ATP is bound by residues glutamine 89, 107 to 111 (GEGKT), and aspartate 502. Positions 887, 889, 898, and 899 each coordinate Zn(2+).

Belongs to the SecA family. As to quaternary structure, monomer and homodimer. Part of the essential Sec protein translocation apparatus which comprises SecA, SecYEG and auxiliary proteins SecDF-YajC and YidC. It depends on Zn(2+) as a cofactor.

The protein resides in the cell inner membrane. The protein localises to the cytoplasm. The enzyme catalyses ATP + H2O + cellular proteinSide 1 = ADP + phosphate + cellular proteinSide 2.. Functionally, part of the Sec protein translocase complex. Interacts with the SecYEG preprotein conducting channel. Has a central role in coupling the hydrolysis of ATP to the transfer of proteins into and across the cell membrane, serving both as a receptor for the preprotein-SecB complex and as an ATP-driven molecular motor driving the stepwise translocation of polypeptide chains across the membrane. The polypeptide is Protein translocase subunit SecA (Jannaschia sp. (strain CCS1)).